Here is a 181-residue protein sequence, read N- to C-terminus: Ribosome-recycling factor (181 aa).

It belongs to the RRF family.

It is found in the cytoplasm. In terms of biological role, responsible for the release of ribosomes from messenger RNA at the termination of protein biosynthesis. May increase the efficiency of translation by recycling ribosomes from one round of translation to another. This Tropheryma whipplei (strain TW08/27) (Whipple's bacillus) protein is Ribosome-recycling factor.